Here is a 147-residue protein sequence, read N- to C-terminus: Cyanate hydratase (147 aa).

Residues arginine 88, glutamate 91, and serine 114 contribute to the active site.

It belongs to the cyanase family.

The catalysed reaction is cyanate + hydrogencarbonate + 3 H(+) = NH4(+) + 2 CO2. In terms of biological role, catalyzes the reaction of cyanate with bicarbonate to produce ammonia and carbon dioxide. This chain is Cyanate hydratase, found in Methylobacillus flagellatus (strain ATCC 51484 / DSM 6875 / VKM B-1610 / KT).